The sequence spans 209 residues: Fibroblast growth factor 21 (209 aa).

The signal sequence occupies residues 1–28; that stretch reads MDSDETGFEHSGLWVSVLAGLLLGACQA. Positions 143 to 209 are disordered; that stretch reads PLHLPGNKSP…SQGRSPSYAS (67 aa). Pro residues predominate over residues 168 to 186; it reads PGLPPALPEPPGILAPQPP.

The protein belongs to the heparin-binding growth factors family. In terms of assembly, interacts (via C-terminus) with KLB; this interaction is direct. Interacts with FGFR4.

It localises to the secreted. Its function is as follows. Stimulates glucose uptake in differentiated adipocytes via the induction of glucose transporter SLC2A1/GLUT1 expression (but not SLC2A4/GLUT4 expression). Activity requires the presence of KLB. Regulates systemic glucose homeostasis and insulin sensitivity. The protein is Fibroblast growth factor 21 (FGF21) of Homo sapiens (Human).